A 1221-amino-acid chain; its full sequence is DNA-directed RNA polymerase subunit beta' (1221 aa).

Positions 60, 62, 75, and 78 each coordinate Zn(2+). Mg(2+) is bound by residues aspartate 449, aspartate 451, and aspartate 453. 4 residues coordinate Zn(2+): cysteine 821, cysteine 896, cysteine 903, and cysteine 906.

It belongs to the RNA polymerase beta' chain family. In terms of assembly, the RNAP catalytic core consists of 2 alpha, 1 beta, 1 beta' and 1 omega subunit. When a sigma factor is associated with the core the holoenzyme is formed, which can initiate transcription. Requires Mg(2+) as cofactor. Zn(2+) serves as cofactor.

It carries out the reaction RNA(n) + a ribonucleoside 5'-triphosphate = RNA(n+1) + diphosphate. In terms of biological role, DNA-dependent RNA polymerase catalyzes the transcription of DNA into RNA using the four ribonucleoside triphosphates as substrates. In Lactobacillus delbrueckii subsp. bulgaricus (strain ATCC BAA-365 / Lb-18), this protein is DNA-directed RNA polymerase subunit beta'.